Reading from the N-terminus, the 198-residue chain is Sorcin (198 aa).

4 consecutive EF-hand domains span residues 29-64 (GQTQ…SGIA), 70-103 (FNLE…AVLN), 100-135 (AVLN…MGFR), and 134-169 (FRLS…LRAL). Positions 83, 85, 87, 89, 94, 113, 115, 117, 119, and 124 each coordinate Ca(2+).

Homodimer. Interacts with GCA, RYR2 and ANXA7. In terms of tissue distribution, detected in cardiac myocytes.

The protein localises to the cytoplasm. It is found in the sarcoplasmic reticulum membrane. Calcium-binding protein that modulates excitation-contraction coupling in the heart. Contributes to calcium homeostasis in the heart sarcoplasmic reticulum. Modulates the activity of RYR2 calcium channels. The chain is Sorcin (SRI) from Homo sapiens (Human).